A 455-amino-acid polypeptide reads, in one-letter code: Bifunctional protein GlmU (455 aa).

The segment at 1-226 (MGLSVVILAA…EFEILGVNDR (226 aa)) is pyrophosphorylase. Residues 8 to 11 (LAAG), Lys-22, Gln-73, 78 to 79 (GT), 99 to 101 (YGD), Gly-136, Glu-151, Asn-166, and Asn-224 each bind UDP-N-acetyl-alpha-D-glucosamine. Asp-101 is a binding site for Mg(2+). Mg(2+) is bound at residue Asn-224. The tract at residues 227-247 (TQLASLERVWQRNVAEKIMAK) is linker. Residues 248–455 (GVSIADPNRF…WQRSVKKTDK (208 aa)) are N-acetyltransferase. Positions 330 and 348 each coordinate UDP-N-acetyl-alpha-D-glucosamine. Catalysis depends on His-360, which acts as the Proton acceptor. UDP-N-acetyl-alpha-D-glucosamine-binding residues include Tyr-363 and Asn-374. Acetyl-CoA is bound by residues Ala-377, 383 to 384 (NY), Ser-402, Ala-420, and Arg-437.

In the N-terminal section; belongs to the N-acetylglucosamine-1-phosphate uridyltransferase family. The protein in the C-terminal section; belongs to the transferase hexapeptide repeat family. Homotrimer. It depends on Mg(2+) as a cofactor.

It is found in the cytoplasm. The enzyme catalyses alpha-D-glucosamine 1-phosphate + acetyl-CoA = N-acetyl-alpha-D-glucosamine 1-phosphate + CoA + H(+). It catalyses the reaction N-acetyl-alpha-D-glucosamine 1-phosphate + UTP + H(+) = UDP-N-acetyl-alpha-D-glucosamine + diphosphate. Its pathway is nucleotide-sugar biosynthesis; UDP-N-acetyl-alpha-D-glucosamine biosynthesis; N-acetyl-alpha-D-glucosamine 1-phosphate from alpha-D-glucosamine 6-phosphate (route II): step 2/2. The protein operates within nucleotide-sugar biosynthesis; UDP-N-acetyl-alpha-D-glucosamine biosynthesis; UDP-N-acetyl-alpha-D-glucosamine from N-acetyl-alpha-D-glucosamine 1-phosphate: step 1/1. It functions in the pathway bacterial outer membrane biogenesis; LPS lipid A biosynthesis. Its function is as follows. Catalyzes the last two sequential reactions in the de novo biosynthetic pathway for UDP-N-acetylglucosamine (UDP-GlcNAc). The C-terminal domain catalyzes the transfer of acetyl group from acetyl coenzyme A to glucosamine-1-phosphate (GlcN-1-P) to produce N-acetylglucosamine-1-phosphate (GlcNAc-1-P), which is converted into UDP-GlcNAc by the transfer of uridine 5-monophosphate (from uridine 5-triphosphate), a reaction catalyzed by the N-terminal domain. This Francisella tularensis subsp. holarctica (strain OSU18) protein is Bifunctional protein GlmU.